The chain runs to 360 residues: CCA-adding enzyme (360 aa).

ATP contacts are provided by Gly8 and Arg11. CTP contacts are provided by Gly8 and Arg11. 2 residues coordinate Mg(2+): Asp21 and Asp23. Residues Arg91, Arg137, and Arg140 each contribute to the ATP site. Residues Arg91, Arg137, and Arg140 each contribute to the CTP site.

The protein belongs to the tRNA nucleotidyltransferase/poly(A) polymerase family. Bacterial CCA-adding enzyme type 2 subfamily. Requires Mg(2+) as cofactor.

The catalysed reaction is a tRNA precursor + 2 CTP + ATP = a tRNA with a 3' CCA end + 3 diphosphate. The enzyme catalyses a tRNA with a 3' CCA end + 2 CTP + ATP = a tRNA with a 3' CCACCA end + 3 diphosphate. In terms of biological role, catalyzes the addition and repair of the essential 3'-terminal CCA sequence in tRNAs without using a nucleic acid template. Adds these three nucleotides in the order of C, C, and A to the tRNA nucleotide-73, using CTP and ATP as substrates and producing inorganic pyrophosphate. tRNA 3'-terminal CCA addition is required both for tRNA processing and repair. Also involved in tRNA surveillance by mediating tandem CCA addition to generate a CCACCA at the 3' terminus of unstable tRNAs. While stable tRNAs receive only 3'-terminal CCA, unstable tRNAs are marked with CCACCA and rapidly degraded. The polypeptide is CCA-adding enzyme (Francisella tularensis subsp. tularensis (strain FSC 198)).